We begin with the raw amino-acid sequence, 654 residues long: DNA ligase (654 aa).

NAD(+) contacts are provided by residues 37 to 41 (DEEYD), 86 to 87 (SM), and Glu-113. Lys-115 (N6-AMP-lysine intermediate) is an active-site residue. Arg-136, Glu-170, and Lys-308 together coordinate NAD(+). Positions 402, 405, 418, and 423 each coordinate Zn(2+). The BRCT domain occupies 576–654 (ITQNAFSGKS…GEFERLKLEI (79 aa)).

It belongs to the NAD-dependent DNA ligase family. LigA subfamily. Mg(2+) serves as cofactor. It depends on Mn(2+) as a cofactor.

The catalysed reaction is NAD(+) + (deoxyribonucleotide)n-3'-hydroxyl + 5'-phospho-(deoxyribonucleotide)m = (deoxyribonucleotide)n+m + AMP + beta-nicotinamide D-nucleotide.. DNA ligase that catalyzes the formation of phosphodiester linkages between 5'-phosphoryl and 3'-hydroxyl groups in double-stranded DNA using NAD as a coenzyme and as the energy source for the reaction. It is essential for DNA replication and repair of damaged DNA. The sequence is that of DNA ligase from Campylobacter curvus (strain 525.92).